Consider the following 338-residue polypeptide: Ketol-acid reductoisomerase (NADP(+)) (338 aa).

The region spanning 1–181 is the KARI N-terminal Rossmann domain; sequence MKVYYDKDCD…GGGRTGIIET (181 aa). Residues 24-27, arginine 47, serine 50, threonine 52, and 82-85 contribute to the NADP(+) site; these read YGSQ and DEFQ. Residue histidine 107 is part of the active site. Glycine 133 provides a ligand contact to NADP(+). The region spanning 182-327 is the KARI C-terminal knotted domain; that stretch reads TFKDETETDL…EQLRAMMPWI (146 aa). Residues aspartate 190, glutamate 194, glutamate 226, and glutamate 230 each coordinate Mg(2+). Serine 251 contacts substrate.

The protein belongs to the ketol-acid reductoisomerase family. It depends on Mg(2+) as a cofactor.

The catalysed reaction is (2R)-2,3-dihydroxy-3-methylbutanoate + NADP(+) = (2S)-2-acetolactate + NADPH + H(+). It carries out the reaction (2R,3R)-2,3-dihydroxy-3-methylpentanoate + NADP(+) = (S)-2-ethyl-2-hydroxy-3-oxobutanoate + NADPH + H(+). It functions in the pathway amino-acid biosynthesis; L-isoleucine biosynthesis; L-isoleucine from 2-oxobutanoate: step 2/4. It participates in amino-acid biosynthesis; L-valine biosynthesis; L-valine from pyruvate: step 2/4. In terms of biological role, involved in the biosynthesis of branched-chain amino acids (BCAA). Catalyzes an alkyl-migration followed by a ketol-acid reduction of (S)-2-acetolactate (S2AL) to yield (R)-2,3-dihydroxy-isovalerate. In the isomerase reaction, S2AL is rearranged via a Mg-dependent methyl migration to produce 3-hydroxy-3-methyl-2-ketobutyrate (HMKB). In the reductase reaction, this 2-ketoacid undergoes a metal-dependent reduction by NADPH to yield (R)-2,3-dihydroxy-isovalerate. This chain is Ketol-acid reductoisomerase (NADP(+)), found in Ectopseudomonas mendocina (strain ymp) (Pseudomonas mendocina).